Reading from the N-terminus, the 282-residue chain is Probable protein phosphatase 2C 45 (282 aa).

Residues 27–272 enclose the PPM-type phosphatase domain; sequence SYGYASSPGK…DNITCVVVRF (246 aa). The Mn(2+) site is built by Asp63, Gly64, Asp224, and Asp263.

Belongs to the PP2C family. Mg(2+) serves as cofactor. Requires Mn(2+) as cofactor.

It carries out the reaction O-phospho-L-seryl-[protein] + H2O = L-seryl-[protein] + phosphate. The catalysed reaction is O-phospho-L-threonyl-[protein] + H2O = L-threonyl-[protein] + phosphate. In Oryza sativa subsp. japonica (Rice), this protein is Probable protein phosphatase 2C 45.